A 967-amino-acid chain; its full sequence is Vacuolar membrane protease (967 aa).

Residues 1–16 (MARPSLSRSNPLGFTP) are Cytoplasmic-facing. The helical transmembrane segment at 17–37 (WPVTVITAVVYLALVVPLLVV) threads the bilayer. Over 38–387 (HHVVPSAPSS…SAFVVFELHT (350 aa)) the chain is Vacuolar. 2 N-linked (GlcNAc...) asparagine glycosylation sites follow: N53 and N119. Zn(2+)-binding residues include H171 and D183. E217 serves as the catalytic Proton acceptor. Residues E218, E243, and H316 each coordinate Zn(2+). Residues 388 to 408 (LFALSVTLLVVAPLVLLVTSI) form a helical membrane-spanning segment. The Cytoplasmic segment spans residues 409–441 (ALNRADKMYLFRASASPEDSDGSEAVLLHGVRG). The helical transmembrane segment at 442-462 (FFRFPFLLVIPTAVTVGLAYL) threads the bilayer. The Vacuolar segment spans residues 463 to 472 (VTKFNPYIIH). Residues 473–493 (SSEYAVWSMMISAWVFLAWFV) traverse the membrane as a helical segment. At 494–507 (SRVADFARPSAFHR) the chain is on the cytoplasmic side. Residues 508–528 (VYTLTWLFLVEWVLLVISTVY) form a helical membrane-spanning segment. Residues 529 to 532 (ENKY) lie on the Vacuolar side of the membrane. Residues 533-553 (GLAGGYFVFFAFAGTFLATWI) form a helical membrane-spanning segment. Residues 554–663 (SYLELFALPR…WSIHLPKWVW (110 aa)) are Cytoplasmic-facing. The segment at 579-612 (SSHGSRLGTASGEDVEDGEDEDEDDDGTTAEATE) is disordered. Over residues 591 to 606 (EDVEDGEDEDEDDDGT) the composition is skewed to acidic residues. The chain crosses the membrane as a helical span at residues 664–684 (VLQFLLTAPLVLTFVGPLALL). Topologically, residues 685-700 (LTSALRQTGQDGSSSL) are vacuolar. Residues 701–721 (FIYIAVAALTTLLFIPLLPFI) form a helical membrane-spanning segment. The Cytoplasmic portion of the chain corresponds to 722–727 (HRYTHH). Residues 728–748 (IPLFLLCVFAGTLIYNLVAFP) form a helical membrane-spanning segment. The Vacuolar portion of the chain corresponds to 749 to 967 (FSPANRLKLF…LVEGSRRFEI (219 aa)). N795 and N832 each carry an N-linked (GlcNAc...) asparagine glycan.

It belongs to the peptidase M28 family. Requires Zn(2+) as cofactor.

The protein resides in the vacuole membrane. May be involved in vacuolar sorting and osmoregulation. This chain is Vacuolar membrane protease, found in Neosartorya fischeri (strain ATCC 1020 / DSM 3700 / CBS 544.65 / FGSC A1164 / JCM 1740 / NRRL 181 / WB 181) (Aspergillus fischerianus).